The primary structure comprises 142 residues: Large ribosomal subunit protein uL11 (142 aa).

The protein belongs to the universal ribosomal protein uL11 family. As to quaternary structure, part of the ribosomal stalk of the 50S ribosomal subunit. Interacts with L10 and the large rRNA to form the base of the stalk. L10 forms an elongated spine to which L12 dimers bind in a sequential fashion forming a multimeric L10(L12)X complex. One or more lysine residues are methylated.

Its function is as follows. Forms part of the ribosomal stalk which helps the ribosome interact with GTP-bound translation factors. This is Large ribosomal subunit protein uL11 from Bartonella tribocorum (strain CIP 105476 / IBS 506).